Here is a 224-residue protein sequence, read N- to C-terminus: V-type ATP synthase subunit D (224 aa).

Residues 190-224 form a disordered region; sequence REAGYTQKKIKAKIEGKNKEAREAAAATSHGSAAD. Residues 201 to 212 show a composition bias toward basic and acidic residues; that stretch reads AKIEGKNKEARE. The span at 213 to 224 shows a compositional bias: low complexity; it reads AAAATSHGSAAD.

This sequence belongs to the V-ATPase D subunit family.

Its function is as follows. Produces ATP from ADP in the presence of a proton gradient across the membrane. This is V-type ATP synthase subunit D (atpD) from Deinococcus radiodurans (strain ATCC 13939 / DSM 20539 / JCM 16871 / CCUG 27074 / LMG 4051 / NBRC 15346 / NCIMB 9279 / VKM B-1422 / R1).